The chain runs to 697 residues: ATP-dependent zinc metalloprotease FtsH (697 aa).

A disordered region spans residues 1-23 (MSQNERDSLELERKNTPPDGPRL). Topologically, residues 1–29 (MSQNERDSLELERKNTPPDGPRLPERRPR) are cytoplasmic. Residues 30–50 (FSVWIYLAIFLALLVHFFLFW) traverse the membrane as a helical segment. Over 51–158 (TGTDTSTIEY…QFTARIEENW (108 aa)) the chain is Periplasmic. Residues 159–179 (FGGLLTWIFPLILIVALWVFL) form a helical membrane-spanning segment. Over 180–697 (LRRMSPSSQV…TERPESSSAP (518 aa)) the chain is Cytoplasmic. 251 to 258 (GPPGTGKT) serves as a coordination point for ATP. His474 serves as a coordination point for Zn(2+). The active site involves Glu475. Zn(2+)-binding residues include His478 and Asp550. A disordered region spans residues 649–697 (GPRPYGDYPSPNGKDVEELKDLQKGEPTSSSAVEAPAPQTERPESSSAP). A compositionally biased stretch (basic and acidic residues) spans 662–672 (KDVEELKDLQK).

It in the central section; belongs to the AAA ATPase family. In the C-terminal section; belongs to the peptidase M41 family. As to quaternary structure, homohexamer. Zn(2+) is required as a cofactor.

The protein resides in the cell inner membrane. Acts as a processive, ATP-dependent zinc metallopeptidase for both cytoplasmic and membrane proteins. Plays a role in the quality control of integral membrane proteins. This Rhodothermus marinus (strain ATCC 43812 / DSM 4252 / R-10) (Rhodothermus obamensis) protein is ATP-dependent zinc metalloprotease FtsH.